Reading from the N-terminus, the 92-residue chain is Late cornified envelope protein 3E (92 aa).

The segment covering 1-10 has biased composition (low complexity); it reads MSCQQNQKQC. Disordered regions lie at residues 1-22 and 64-92; these read MSCQ…PKCP and RRQR…GGCC. The segment covering 11–22 has biased composition (pro residues); the sequence is QPPPKCPSPKCP. Residues 76-92 show a composition bias toward gly residues; sequence GQQGGGSGCCHGSGGCC.

This sequence belongs to the LCE family. Interacts with CYSRT1. In terms of tissue distribution, skin-specific. Expression was readily detected in adult trunk skin, adult arm skin, fetal skin, penal skin, vulva, esophagus and tongue. Not expressed in the cervix, rectum, lung, colon, or placenta.

Functionally, precursors of the cornified envelope of the stratum corneum. In Homo sapiens (Human), this protein is Late cornified envelope protein 3E (LCE3E).